The primary structure comprises 491 residues: Protein nucleotidyltransferase YdiU (491 aa).

G94, G96, R97, K117, D129, G130, R180, and R187 together coordinate ATP. D256 functions as the Proton acceptor in the catalytic mechanism. Residues N257 and D266 each contribute to the Mg(2+) site. D266 is a binding site for ATP.

This sequence belongs to the SELO family. The cofactor is Mg(2+). Mn(2+) serves as cofactor.

The enzyme catalyses L-seryl-[protein] + ATP = 3-O-(5'-adenylyl)-L-seryl-[protein] + diphosphate. It catalyses the reaction L-threonyl-[protein] + ATP = 3-O-(5'-adenylyl)-L-threonyl-[protein] + diphosphate. It carries out the reaction L-tyrosyl-[protein] + ATP = O-(5'-adenylyl)-L-tyrosyl-[protein] + diphosphate. The catalysed reaction is L-histidyl-[protein] + UTP = N(tele)-(5'-uridylyl)-L-histidyl-[protein] + diphosphate. The enzyme catalyses L-seryl-[protein] + UTP = O-(5'-uridylyl)-L-seryl-[protein] + diphosphate. It catalyses the reaction L-tyrosyl-[protein] + UTP = O-(5'-uridylyl)-L-tyrosyl-[protein] + diphosphate. Its function is as follows. Nucleotidyltransferase involved in the post-translational modification of proteins. It can catalyze the addition of adenosine monophosphate (AMP) or uridine monophosphate (UMP) to a protein, resulting in modifications known as AMPylation and UMPylation. This is Protein nucleotidyltransferase YdiU from Clostridium botulinum (strain ATCC 19397 / Type A).